The sequence spans 838 residues: Extragenic suppressor of kinetochore protein 1 (838 aa).

2 positions are modified to phosphoserine: Ser-411 and Ser-418. The disordered stretch occupies residues 411–468; sequence SDEDDDDSTFSDKNSKDFKETEDMNGAEDMHGRAPQITKDNLNLTTTDSPMSEAEPVS. The residue at position 419 (Thr-419) is a Phosphothreonine. Residues 423-442 show a composition bias toward basic and acidic residues; the sequence is KNSKDFKETEDMNGAEDMHG. Residues Ser-425, Ser-459, Ser-468, and Ser-491 each carry the phosphoserine modification. Polar residues predominate over residues 448–460; the sequence is TKDNLNLTTTDSP. Thr-493 carries the phosphothreonine modification. Ser-494 is subject to Phosphoserine. Positions 690 to 700 are enriched in acidic residues; sequence ELESNSSDDDV. Disordered regions lie at residues 690–745 and 757–838; these read ELES…DQDN and ISDN…NHGK. A phosphoserine mark is found at Ser-711 and Ser-713. Residues 714–723 are compositionally biased toward acidic residues; sequence NDEDDGNDED. Residues 724–734 are compositionally biased toward basic and acidic residues; that stretch reads PLSREMSRRLS. Acidic residues-rich tracts occupy residues 768 to 779 and 806 to 818; these read SDEDDDDDDEVV and SDSE…DSSD.

It belongs to the SAPS family. In terms of assembly, interacts with ppe1 and mis12.

The protein localises to the nucleus. Functionally, has a role in chromosome segregation. May provide a dynamic connection between kinetochore microtubules and kinetochore chromatin. This is Extragenic suppressor of kinetochore protein 1 (ekc1) from Schizosaccharomyces pombe (strain 972 / ATCC 24843) (Fission yeast).